The primary structure comprises 365 residues: 5-hydroxytryptamine receptor 1E (365 aa).

Residues 1–21 (MNITNCTTEASMAIRPKTITE) are Extracellular-facing. N-linked (GlcNAc...) asparagine glycans are attached at residues asparagine 2 and asparagine 5. The helical transmembrane segment at 22–45 (KMLICMTLVVITTLTTLLNLAVIM) threads the bilayer. The Cytoplasmic portion of the chain corresponds to 46–59 (AIGTTKKLHQPANY). Residues 60 to 84 (LICSLAVTDLLVAVLVMPLSIIYIV) traverse the membrane as a helical segment. Over 85 to 92 (MDRWKLGY) the chain is Extracellular. The helical transmembrane segment at 93–118 (FLCEVWLSVDMTCCTCSILHLCVIAL) threads the bilayer. Cysteine 95 and cysteine 173 are disulfide-bonded. The serotonin site is built by aspartate 102 and cysteine 106. The DRY motif; important for ligand-induced conformation changes signature appears at 119–121 (DRY). Residues 119–138 (DRYWAITNAIEYARKRTAKR) are Cytoplasmic-facing. A helical membrane pass occupies residues 139-157 (AALMILTVWTISIFISMPP). The Extracellular portion of the chain corresponds to 158–179 (LFWRSHRRLSPPPSQCTIQHDH). A helical transmembrane segment spans residues 180-203 (VIYTIYSTLGAFYIPLTLILILYY). Residues 204–291 (RIYHAAKSLY…SSTRERKAAR (88 aa)) are Cytoplasmic-facing. The helical transmembrane segment at 292–316 (ILGLILGAFILSWLPFFIKELIVGL) threads the bilayer. Residues 317–322 (SIYTVS) lie on the Extracellular side of the membrane. Residues 323 to 345 (SEVADFLTWLGYVNSLINPLLYT) traverse the membrane as a helical segment. Positions 340 to 344 (NPLLY) match the NPxxY motif; important for ligand-induced conformation changes and signaling motif. The Cytoplasmic portion of the chain corresponds to 346–365 (SFNEDFKLAFKKLIRCREHT).

It belongs to the G-protein coupled receptor 1 family. As to expression, detected in brain.

It is found in the cell membrane. In terms of biological role, G-protein coupled receptor for 5-hydroxytryptamine (serotonin). Also functions as a receptor for various alkaloids and psychoactive substances. Ligand binding causes a conformation change that triggers signaling via guanine nucleotide-binding proteins (G proteins) and modulates the activity of downstream effectors, such as adenylate cyclase. HTR1E is coupled to G(i)/G(o) G alpha proteins and mediates inhibitory neurotransmission by inhibiting adenylate cyclase activity. This chain is 5-hydroxytryptamine receptor 1E, found in Homo sapiens (Human).